The following is a 143-amino-acid chain: Large ribosomal subunit protein uL11 (143 aa).

This sequence belongs to the universal ribosomal protein uL11 family. As to quaternary structure, part of the ribosomal stalk of the 50S ribosomal subunit. Interacts with L10 and the large rRNA to form the base of the stalk. L10 forms an elongated spine to which L12 dimers bind in a sequential fashion forming a multimeric L10(L12)X complex. In terms of processing, one or more lysine residues are methylated.

Forms part of the ribosomal stalk which helps the ribosome interact with GTP-bound translation factors. In Koribacter versatilis (strain Ellin345), this protein is Large ribosomal subunit protein uL11.